The primary structure comprises 295 residues: Spermatogenesis-associated protein 4 (295 aa).

The segment at 1-34 (MAAAGQAEECLPLPAAESSKTSLPTPPAVPAGKK) is disordered. Positions 48 to 154 (SRLSRSVLRW…QEIYTLLTHQ (107 aa)) constitute a Calponin-homology (CH) domain. The segment at 251–295 (KRRYKSRGSKEKAAQPLSKSDNDGNARKEIHVKQSGNPCENTENL) is disordered. Residues 270–282 (SDNDGNARKEIHV) show a composition bias toward basic and acidic residues. Residues 284 to 295 (QSGNPCENTENL) are compositionally biased toward polar residues.

Testis.

It localises to the nucleus. Functionally, may play a role in apoptosis regulation. This chain is Spermatogenesis-associated protein 4 (Spata4), found in Mus musculus (Mouse).